A 391-amino-acid chain; its full sequence is Inactive polyketide synthase 2 (391 aa).

C164 is a catalytic residue.

The protein belongs to the thiolase-like superfamily. Chalcone/stilbene synthases family. As to quaternary structure, homodimer.

In Rubus idaeus (Raspberry), this protein is Inactive polyketide synthase 2 (PKS2).